The chain runs to 303 residues: UDP-3-O-acyl-N-acetylglucosamine deacetylase (303 aa).

3 residues coordinate Zn(2+): His-78, His-237, and Asp-241. Residue His-264 is the Proton donor of the active site.

This sequence belongs to the LpxC family. Zn(2+) serves as cofactor.

The enzyme catalyses a UDP-3-O-[(3R)-3-hydroxyacyl]-N-acetyl-alpha-D-glucosamine + H2O = a UDP-3-O-[(3R)-3-hydroxyacyl]-alpha-D-glucosamine + acetate. It participates in glycolipid biosynthesis; lipid IV(A) biosynthesis; lipid IV(A) from (3R)-3-hydroxytetradecanoyl-[acyl-carrier-protein] and UDP-N-acetyl-alpha-D-glucosamine: step 2/6. Catalyzes the hydrolysis of UDP-3-O-myristoyl-N-acetylglucosamine to form UDP-3-O-myristoylglucosamine and acetate, the committed step in lipid A biosynthesis. This Coxiella burnetii (strain CbuK_Q154) (Coxiella burnetii (strain Q154)) protein is UDP-3-O-acyl-N-acetylglucosamine deacetylase.